The sequence spans 204 residues: MSDLVAKTAIDRRLADIVTPVIEGMGFELVRLRLMSGKTRTLQIMADRPDGGIVVDECADISTAVSAVLDVEDPIEDNYTLEVSSPGIDRPLTRLKDFDAWAGYEARIETAELIDGRRRFKGELAGTEGDEVLITIEDGKEGFVTIGLKFDWLSDAKLILTDELIAEMLRQKKASGNFDESQFDEIQETEGEEADEAETPITRH.

The interval 177–204 (NFDESQFDEIQETEGEEADEAETPITRH) is disordered. Over residues 181-198 (SQFDEIQETEGEEADEAE) the composition is skewed to acidic residues.

It belongs to the RimP family.

It is found in the cytoplasm. Functionally, required for maturation of 30S ribosomal subunits. In Cereibacter sphaeroides (strain ATCC 17025 / ATH 2.4.3) (Rhodobacter sphaeroides), this protein is Ribosome maturation factor RimP.